We begin with the raw amino-acid sequence, 261 residues long: Cytochrome c oxidase subunit 3 (261 aa).

The Mitochondrial matrix segment spans residues 1–15 (MTHQTHAYHMVNPSP). A helical transmembrane segment spans residues 16–34 (WPLTGALSALLMTSGLTMW). Residues 35–40 (FHYNST) lie on the Mitochondrial intermembrane side of the membrane. A helical transmembrane segment spans residues 41–66 (ILLMLGLTTNMLTMYQWWRDIIREST). The Mitochondrial matrix segment spans residues 67-72 (FQGHHT). Residues 73-105 (PTVQKGLRYGMILFIISEVLFFTGFFWAFYHSS) traverse the membrane as a helical segment. Topologically, residues 106–128 (LAPTPELGGCWPPTGIHPLNPLE) are mitochondrial intermembrane. A helical transmembrane segment spans residues 129–152 (VPLLNTSVLLASGVSITWAHHSLM). Residues 153–155 (EGD) lie on the Mitochondrial matrix side of the membrane. Residues 156–183 (RNHMLQALFITIALGIYFTLLQASEYYE) form a helical membrane-spanning segment. The Mitochondrial intermembrane segment spans residues 184 to 190 (APFTISD). A helical membrane pass occupies residues 191–223 (GVYGSTFFVATGFHGLHVIIGSTFLIVCFFRQL). Residues 224–232 (KFHFTSSHH) lie on the Mitochondrial matrix side of the membrane. A helical membrane pass occupies residues 233-256 (FGFEAAAWYWHFVDVVWLFLYVSI). At 257 to 261 (YWWGS) the chain is on the mitochondrial intermembrane side.

This sequence belongs to the cytochrome c oxidase subunit 3 family. Component of the cytochrome c oxidase (complex IV, CIV), a multisubunit enzyme composed of 14 subunits. The complex is composed of a catalytic core of 3 subunits MT-CO1, MT-CO2 and MT-CO3, encoded in the mitochondrial DNA, and 11 supernumerary subunits COX4I, COX5A, COX5B, COX6A, COX6B, COX6C, COX7A, COX7B, COX7C, COX8 and NDUFA4, which are encoded in the nuclear genome. The complex exists as a monomer or a dimer and forms supercomplexes (SCs) in the inner mitochondrial membrane with NADH-ubiquinone oxidoreductase (complex I, CI) and ubiquinol-cytochrome c oxidoreductase (cytochrome b-c1 complex, complex III, CIII), resulting in different assemblies (supercomplex SCI(1)III(2)IV(1) and megacomplex MCI(2)III(2)IV(2)).

Its subcellular location is the mitochondrion inner membrane. The enzyme catalyses 4 Fe(II)-[cytochrome c] + O2 + 8 H(+)(in) = 4 Fe(III)-[cytochrome c] + 2 H2O + 4 H(+)(out). In terms of biological role, component of the cytochrome c oxidase, the last enzyme in the mitochondrial electron transport chain which drives oxidative phosphorylation. The respiratory chain contains 3 multisubunit complexes succinate dehydrogenase (complex II, CII), ubiquinol-cytochrome c oxidoreductase (cytochrome b-c1 complex, complex III, CIII) and cytochrome c oxidase (complex IV, CIV), that cooperate to transfer electrons derived from NADH and succinate to molecular oxygen, creating an electrochemical gradient over the inner membrane that drives transmembrane transport and the ATP synthase. Cytochrome c oxidase is the component of the respiratory chain that catalyzes the reduction of oxygen to water. Electrons originating from reduced cytochrome c in the intermembrane space (IMS) are transferred via the dinuclear copper A center (CU(A)) of subunit 2 and heme A of subunit 1 to the active site in subunit 1, a binuclear center (BNC) formed by heme A3 and copper B (CU(B)). The BNC reduces molecular oxygen to 2 water molecules using 4 electrons from cytochrome c in the IMS and 4 protons from the mitochondrial matrix. This chain is Cytochrome c oxidase subunit 3 (MT-CO3), found in Tragelaphus imberbis (Lesser kudu).